A 315-amino-acid polypeptide reads, in one-letter code: UDP-3-O-acyl-N-acetylglucosamine deacetylase (315 aa).

Residues H78, H235, and D239 each coordinate Zn(2+). H262 acts as the Proton donor in catalysis.

It belongs to the LpxC family. Zn(2+) serves as cofactor.

It catalyses the reaction a UDP-3-O-[(3R)-3-hydroxyacyl]-N-acetyl-alpha-D-glucosamine + H2O = a UDP-3-O-[(3R)-3-hydroxyacyl]-alpha-D-glucosamine + acetate. It functions in the pathway glycolipid biosynthesis; lipid IV(A) biosynthesis; lipid IV(A) from (3R)-3-hydroxytetradecanoyl-[acyl-carrier-protein] and UDP-N-acetyl-alpha-D-glucosamine: step 2/6. Functionally, catalyzes the hydrolysis of UDP-3-O-myristoyl-N-acetylglucosamine to form UDP-3-O-myristoylglucosamine and acetate, the committed step in lipid A biosynthesis. This is UDP-3-O-acyl-N-acetylglucosamine deacetylase from Syntrophus aciditrophicus (strain SB).